A 914-amino-acid polypeptide reads, in one-letter code: Thyroid peroxidase (914 aa).

An N-terminal signal peptide occupies residues 1–31; the sequence is MRTLGAMAVMLVVMGTAIFLPFLLRSRDILG. Residues 32–834 lie on the Extracellular side of the membrane; that stretch reads GKTMTSHVIS…TCIDSGRLPR (803 aa). An N-linked (GlcNAc...) asparagine glycan is attached at Asn123. Cysteines 136 and 152 form a disulfide. Heme b is bound at residue Asp232. The active-site Proton acceptor is His233. Asp234 contributes to the Ca(2+) binding site. 2 disulfide bridges follow: Cys253/Cys263 and Cys257/Cys278. N-linked (GlcNAc...) asparagine glycosylation is found at Asn271 and Asn299. Residues Thr313, Phe315, Asp317, and Ser319 each coordinate Ca(2+). Asn334 is a glycosylation site (N-linked (GlcNAc...) asparagine). Positions 387 and 482 each coordinate heme b. 7 cysteine pairs are disulfide-bonded: Cys586/Cys643, Cys684/Cys709, Cys730/Cys770, Cys756/Cys782, Cys788/Cys802, Cys796/Cys811, and Cys813/Cys826. An N-linked (GlcNAc...) asparagine glycan is attached at Asn603. The 56-residue stretch at 728–783 folds into the Sushi domain; the sequence is DKCVFPEKVDNGNFVHCEESGKLVLVYSCFHGYKLQGQEQVTCTQNGWDSEPPVCK. The 44-residue stretch at 784–827 folds into the EGF-like; calcium-binding domain; that stretch reads DVNECADLTHPPCHSSAKCKNTKGSFQCVCTDPYMLGEDEKTCI. The chain crosses the membrane as a helical span at residues 835–859; sequence ASWVSIALGALLIGGLASLSWTVIC. Over 860-914 the chain is Cytoplasmic; sequence RWTHADKKSTLLITERVTMESGFRKSQESGISPQKAEVQDAEQEPAYGSRVLLCE. The segment at 882–907 is disordered; that stretch reads FRKSQESGISPQKAEVQDAEQEPAYG.

The protein belongs to the peroxidase family. XPO subfamily. In terms of assembly, interacts with DUOX1, DUOX2 and CYBA. Requires Ca(2+) as cofactor. It depends on heme b as a cofactor. Post-translationally, heme is covalently bound through a H(2)O(2)-dependent autocatalytic process. Heme insertion is important for the delivery of protein at the cell surface. Cleaved in its N-terminal part.

Its subcellular location is the membrane. The enzyme catalyses 2 iodide + H2O2 + 2 H(+) = diiodine + 2 H2O. It carries out the reaction [thyroglobulin]-L-tyrosine + iodide + H2O2 + H(+) = [thyroglobulin]-3-iodo-L-tyrosine + 2 H2O. It catalyses the reaction [thyroglobulin]-3-iodo-L-tyrosine + iodide + H2O2 + H(+) = [thyroglobulin]-3,5-diiodo-L-tyrosine + 2 H2O. The catalysed reaction is 2 [thyroglobulin]-3,5-diiodo-L-tyrosine + H2O2 = [thyroglobulin]-L-thyroxine + [thyroglobulin]-dehydroalanine + 2 H2O. The enzyme catalyses [thyroglobulin]-3-iodo-L-tyrosine + [thyroglobulin]-3,5-diiodo-L-tyrosine + H2O2 = [thyroglobulin]-3,3',5-triiodo-L-thyronine + [thyroglobulin]-dehydroalanine + 2 H2O. Its pathway is hormone biosynthesis; thyroid hormone biosynthesis. Iodination and coupling of the hormonogenic tyrosines in thyroglobulin to yield the thyroid hormones T(3) and T(4). This chain is Thyroid peroxidase (Tpo), found in Rattus norvegicus (Rat).